Here is a 1447-residue protein sequence, read N- to C-terminus: Netrin receptor DCC (1447 aa).

The first 25 residues, 1–25, serve as a signal peptide directing secretion; it reads MENSLRCVWVPKLAFVLFGASLFSA. 4 consecutive Ig-like C2-type domains span residues 26-135, 139-229, 234-326, and 331-416; these read HLQV…AKVA, PLRF…AEVR, PGLH…AELT, and PWFL…AQLI. Residues 26–1097 are Extracellular-facing; the sequence is HLQVTGFQIK…GSVTPQKNSN (1072 aa). Cystine bridges form between C61–C117, C161–C212, and C261–C310. An N-linked (GlcNAc...) asparagine glycan is attached at N94. N-linked (GlcNAc...) asparagine glycans are attached at residues N299 and N318. C352 and C400 form a disulfide bridge. 6 consecutive Fibronectin type-III domains span residues 431–524, 530–620, 625–718, 728–821, 846–942, and 947–1044; these read APRD…TQPE, PVEN…TLSD, PPQN…TPEN, QPSS…TDPT, PPVG…TYEA, and APKD…TLKV. N478 is a glycosylation site (N-linked (GlcNAc...) asparagine). N-linked (GlcNAc...) asparagine glycosylation is found at N628 and N702. Residues 1098 to 1122 traverse the membrane as a helical segment; sequence LLVIIVVTVGVITVLVVVIVAVICT. Over 1123 to 1447 the chain is Cytoplasmic; sequence RRSSAQQRKK…QLNAITGSAF (325 aa). 2 disordered regions span residues 1126–1152 and 1165–1222; these read SAQQ…RPPD and IEKP…TLER. Basic residues predominate over residues 1129–1143; it reads QRKKRATHSAGKRKG. S1178 is modified (phosphoserine; by MAPK1). The segment covering 1179-1221 has biased composition (polar residues); sequence PIQSCQDLTPVSHSQSETQLGSKSTSHSGQDTEEAGSSMSTLE. T1187 bears the Phosphothreonine; by MAPK1 mark. S1267 is modified (phosphoserine; by MAPK1). 2 disordered regions span residues 1288-1330 and 1394-1419; these read SVDR…PSRT and LLPV…SANV. Residues 1297 to 1310 are compositionally biased toward polar residues; it reads RSQSVSEGPTTQQP. The interaction with MYO10 stretch occupies residues 1432-1439; the sequence is LEGLMKQL.

The protein belongs to the immunoglobulin superfamily. DCC family. In terms of assembly, interacts with the cytoplasmic part of UNC5A, UNC5B, UNC5C and probably UNC5D. Interacts with DSCAM. Interacts with PTK2/FAK1 and MAPK1. Interacts with NTN1. Interacts with MYO10. Interacts with CBLN4; this interaction can be competed by NTN1. Interacts with SIAH1 and SIAH2. Ubiquitinated; mediated by SIAH1 or SIAH2 and leading to its subsequent proteasomal degradation. As to expression, found in axons of the central and peripheral nervous system and in differentiated cell types of the intestine. Not expressed in colorectal tumor cells that lost their capacity to differentiate into mucus producing cells.

Its subcellular location is the membrane. In terms of biological role, receptor for netrin required for axon guidance. Mediates axon attraction of neuronal growth cones in the developing nervous system upon ligand binding. Its association with UNC5 proteins may trigger signaling for axon repulsion. It also acts as a dependence receptor required for apoptosis induction when not associated with netrin ligand. Implicated as a tumor suppressor gene. In Homo sapiens (Human), this protein is Netrin receptor DCC (DCC).